The sequence spans 186 residues: Large ribosomal subunit protein uL5 (186 aa).

The protein belongs to the universal ribosomal protein uL5 family. As to quaternary structure, part of the 50S ribosomal subunit; part of the 5S rRNA/L5/L18/L25 subcomplex. Contacts the 5S rRNA and the P site tRNA. Forms a bridge to the 30S subunit in the 70S ribosome.

Its function is as follows. This is one of the proteins that bind and probably mediate the attachment of the 5S RNA into the large ribosomal subunit, where it forms part of the central protuberance. In the 70S ribosome it contacts protein S13 of the 30S subunit (bridge B1b), connecting the 2 subunits; this bridge is implicated in subunit movement. Contacts the P site tRNA; the 5S rRNA and some of its associated proteins might help stabilize positioning of ribosome-bound tRNAs. In Phenylobacterium zucineum (strain HLK1), this protein is Large ribosomal subunit protein uL5.